The primary structure comprises 296 residues: Phosphatidylglycerol--prolipoprotein diacylglyceryl transferase (296 aa).

4 helical membrane-spanning segments follow: residues 10–30 (IAFSLGPVQVHWYGLMYLAAF), 57–77 (LLFYGMLGVVLGGRIGYMLFY), 92–112 (VWEGGMSFHGGLLGVLIACWL), and 119–139 (LHFFDVMDFVAPLVPLGLGFG). A 1,2-diacyl-sn-glycero-3-phospho-(1'-sn-glycerol) is bound at residue Arg140. Transmembrane regions (helical) follow at residues 194–214 (QLYEAALEGVVMFVVLWTFSM), 220–240 (YAVSGLFALLYGVFRFIVEFV), and 254–274 (WLTMGQILSLPLIAVGLVLLA).

This sequence belongs to the Lgt family.

The protein localises to the cell inner membrane. The catalysed reaction is L-cysteinyl-[prolipoprotein] + a 1,2-diacyl-sn-glycero-3-phospho-(1'-sn-glycerol) = an S-1,2-diacyl-sn-glyceryl-L-cysteinyl-[prolipoprotein] + sn-glycerol 1-phosphate + H(+). The protein operates within protein modification; lipoprotein biosynthesis (diacylglyceryl transfer). Functionally, catalyzes the transfer of the diacylglyceryl group from phosphatidylglycerol to the sulfhydryl group of the N-terminal cysteine of a prolipoprotein, the first step in the formation of mature lipoproteins. The chain is Phosphatidylglycerol--prolipoprotein diacylglyceryl transferase from Xanthomonas euvesicatoria pv. vesicatoria (strain 85-10) (Xanthomonas campestris pv. vesicatoria).